A 99-amino-acid chain; its full sequence is DASH complex subunit DAD1 (99 aa).

Residues 69-99 (GMNHQTRENTRDENNKISSSDTEDENNNNKI) form a disordered region. The span at 73–83 (QTRENTRDENN) shows a compositional bias: basic and acidic residues. The span at 89–99 (DTEDENNNNKI) shows a compositional bias: acidic residues.

The protein belongs to the DASH complex DAD1 family. In terms of assembly, component of the DASH complex consisting of ASK1, DAD1, DAD2, DAD3, DAD4, DAM1, DUO1, HSK3, SPC19 and SPC34, with a stoichiometry of one copy of each subunit per complex. Multiple DASH complexes oligomerize to form a ring that encircles spindle microtubules and organizes the rod-like NDC80 complexes of the outer kinetochore. DASH complex oligomerization strengthens microtubule attachments. On cytoplasmic microtubules, DASH complexes appear to form patches instead of rings.

The protein resides in the chromosome. Its subcellular location is the centromere. It is found in the kinetochore. It localises to the cytoplasm. The protein localises to the cytoskeleton. The protein resides in the spindle. Its subcellular location is the nucleus. In terms of biological role, component of the DASH complex that connects microtubules with kinetochores and couples microtubule depolymerisation to chromosome movement; it is involved in retrieving kinetochores to the spindle poles before their re-orientation on the spindle in early mitosis and allows microtubule depolymerization to pull chromosomes apart and resist detachment during anaphase. Kinetochores, consisting of a centromere-associated inner segment and a microtubule-contacting outer segment, play a crucial role in chromosome segregation by mediating the physical connection between centromeric DNA and microtubules. Kinetochores also serve as an input point for the spindle assembly checkpoint, which delays anaphase until all chromosomes have bioriented on the mitotic spindle. In Candida albicans (strain SC5314 / ATCC MYA-2876) (Yeast), this protein is DASH complex subunit DAD1.